The chain runs to 563 residues: Arginine--tRNA ligase (563 aa).

The short motif at 121 to 131 (PNIAKPFSIGH) is the 'HIGH' region element.

The protein belongs to the class-I aminoacyl-tRNA synthetase family. Monomer.

The protein localises to the cytoplasm. The enzyme catalyses tRNA(Arg) + L-arginine + ATP = L-arginyl-tRNA(Arg) + AMP + diphosphate. This Streptococcus pyogenes serotype M12 (strain MGAS2096) protein is Arginine--tRNA ligase.